A 177-amino-acid polypeptide reads, in one-letter code: Large ribosomal subunit protein uL6 (177 aa).

The protein belongs to the universal ribosomal protein uL6 family. Part of the 50S ribosomal subunit.

This protein binds to the 23S rRNA, and is important in its secondary structure. It is located near the subunit interface in the base of the L7/L12 stalk, and near the tRNA binding site of the peptidyltransferase center. In Vibrio atlanticus (strain LGP32) (Vibrio splendidus (strain Mel32)), this protein is Large ribosomal subunit protein uL6.